A 481-amino-acid chain; its full sequence is Probable autolysin LytO (481 aa).

Residues 7 to 148 (KNEFIEWLKT…AYDFPMWFIR (142 aa)) form the Peptidase C51 domain. Over residues 155–165 (TAPRSVQSPTQ) the composition is skewed to polar residues. The tract at residues 155–177 (TAPRSVQSPTQAPKKETAKPQPK) is disordered. The N-acetylmuramoyl-L-alanine amidase domain occupies 198-323 (SNPKGIVIHN…NEFTSTSCPH (126 aa)). Positions 398-466 (EESARFTNGN…YLPIRTWNGS (69 aa)) constitute an SH3b domain.

This sequence belongs to the N-acetylmuramoyl-L-alanine amidase 2 family.

It carries out the reaction Hydrolyzes the link between N-acetylmuramoyl residues and L-amino acid residues in certain cell-wall glycopeptides.. Has weak lytic activity toward S.aureus cells. This is Probable autolysin LytO from Staphylococcus aureus (strain NCTC 8325 / PS 47).